The sequence spans 407 residues: uncharacterized protein (407 aa).

It belongs to the peptidase U32 family.

This is an uncharacterized protein from Methanocaldococcus jannaschii (strain ATCC 43067 / DSM 2661 / JAL-1 / JCM 10045 / NBRC 100440) (Methanococcus jannaschii).